A 396-amino-acid polypeptide reads, in one-letter code: Elongation factor Tu (396 aa).

A tr-type G domain is found at 10–206 (KPHVNVGTIG…ALDSYIPEPV (197 aa)). The segment at 19–26 (GHIDHGKT) is G1. 19–26 (GHIDHGKT) provides a ligand contact to GTP. Thr-26 is a Mg(2+) binding site. Positions 60 to 64 (TKTVT) are G2. The segment at 83–86 (DCPG) is G3. Residues 83 to 87 (DCPGH) and 138 to 141 (NKCD) each bind GTP. Residues 138–141 (NKCD) form a G4 region. The interval 176 to 178 (ASL) is G5.

The protein belongs to the TRAFAC class translation factor GTPase superfamily. Classic translation factor GTPase family. EF-Tu/EF-1A subfamily. In terms of assembly, monomer.

The protein resides in the cytoplasm. The catalysed reaction is GTP + H2O = GDP + phosphate + H(+). In terms of biological role, GTP hydrolase that promotes the GTP-dependent binding of aminoacyl-tRNA to the A-site of ribosomes during protein biosynthesis. The chain is Elongation factor Tu from Sorangium cellulosum (strain So ce56) (Polyangium cellulosum (strain So ce56)).